A 101-amino-acid chain; its full sequence is Cell division suppressor protein YneA (101 aa).

A LysM domain is found at 35 to 86 (MTVTVASGDTLWGLAKQYEPAHGLSPDEFIRWVVDVNRLPSSRLTAGEQIVI).

It belongs to the YneA family.

It is found in the cytoplasm. Inhibits cell division during the SOS response. Affects a later stage of the cell division protein assembly, after the assembly of the Z ring, by probably suppressing recruitment of FtsL and/or DivIC to the division machinery. This Geobacillus thermodenitrificans (strain NG80-2) protein is Cell division suppressor protein YneA.